Consider the following 282-residue polypeptide: Centromere protein P (282 aa).

Residues 1-80 adopt a coiled-coil conformation; the sequence is MEQKYEEDIQ…KDLRRQTEIN (80 aa).

It belongs to the CENP-P/CTF19 family.

Its subcellular location is the nucleus. It localises to the chromosome. The protein localises to the centromere. Probable component of a centromeric complex involved in assembly of kinetochore proteins, mitotic progression and chromosome segregation. The protein is Centromere protein P (cenpp) of Danio rerio (Zebrafish).